We begin with the raw amino-acid sequence, 322 residues long: Transcription factor WRKY45-2 (322 aa).

The segment at 67–110 is disordered; sequence GGEGSEVQSEVTCGGGASAGGKRKAPAANRKANCRRRTQQSSGN. Positions 112 to 180 form a DNA-binding region, WRKY; sequence VVVKNLDDGQ…YIGEHTCRDP (69 aa). The disordered stretch occupies residues 256–284; the sequence is SDQEEVLSSLTPGSSAARGGGVAGPFGPD.

Belongs to the WRKY group III family. Expressed in aleurone cells.

The protein localises to the nucleus. Transcriptional activator involved in defense responses against pathogens. Acts as a positive regulator of defense responses against the rice blast fungus Magnaporthe oryzae. Acts as a positive regulator of defense responses against the bacterial blight Xanthomonas oryzae pv oryzae (Xoo) and the bacterial streak Xanthomonas oryzae pv oryzicola (Xoc). Acts as a positive regulator of abscisic acid (ABA) signaling that suppresses growth of seedlings. Acts as a negative regulator of salt stress response. Acts as a negative regulator of cold stress response. Acts as a negative regulator of drought stress response. The chain is Transcription factor WRKY45-2 from Oryza sativa subsp. indica (Rice).